The following is a 678-amino-acid chain: Protein hook (678 aa).

The interaction with microtubules stretch occupies residues M1–E155. The 119-residue stretch at N5–A123 folds into the Calponin-homology (CH) domain. Coiled-coil stretches lie at residues E135–G435 and Q479–V589.

Belongs to the hook family. Homodimer. Interacts with microtubules via its N-terminus.

The protein localises to the cytoplasm. It localises to the cytoskeleton. Its subcellular location is the endosome. It is found in the synapse. In terms of biological role, involved in endocytic trafficking by stabilizing organelles of the endocytic pathway. Probably acts as a cytoskeletal linker protein required to tether endosome vesicles to the cytoskeleton. Involved in modulation of endocytosis at stages required for down-regulation of membrane proteins that control synapse size. Not involved in synaptic vesicle recycling. Required in R7 cells for boss endocytosis into multivesicular bodies (MVBs). Has a role in regulating adult longevity. The polypeptide is Protein hook (Drosophila virilis (Fruit fly)).